A 207-amino-acid polypeptide reads, in one-letter code: Uracil phosphoribosyltransferase (207 aa).

Residues Arg77, Arg102, and 129 to 137 (DPMLATGGS) each bind 5-phospho-alpha-D-ribose 1-diphosphate. Uracil contacts are provided by residues Ile192 and 197-199 (GDA). Asp198 lines the 5-phospho-alpha-D-ribose 1-diphosphate pocket.

This sequence belongs to the UPRTase family. It depends on Mg(2+) as a cofactor.

It carries out the reaction UMP + diphosphate = 5-phospho-alpha-D-ribose 1-diphosphate + uracil. The protein operates within pyrimidine metabolism; UMP biosynthesis via salvage pathway; UMP from uracil: step 1/1. Its activity is regulated as follows. Allosterically activated by GTP. Catalyzes the conversion of uracil and 5-phospho-alpha-D-ribose 1-diphosphate (PRPP) to UMP and diphosphate. The chain is Uracil phosphoribosyltransferase from Mycoplasma capricolum subsp. capricolum (strain California kid / ATCC 27343 / NCTC 10154).